The primary structure comprises 329 residues: Mitochondrial substrate carrier family protein W (329 aa).

Residues 1-39 (MTTNNSNDNNKRYGIIKQQLQQQQQQHHQQHEQHSRLVE) are Mitochondrial intermembrane-facing. Solcar repeat units follow at residues 34–119 (HSRL…CKEL), 133–221 (ESPL…FKSI), and 231–321 (LGIV…IKKF). Residues 40-60 (MTAGCGAGFMASLFTTPLDVI) traverse the membrane as a helical segment. Residues 61 to 90 (KTTLQVDNSSNKTIMSTVKSILDRKGGVKN) lie on the Mitochondrial matrix side of the membrane. Residues 91–111 (LYLGLKPTLVGQIPSWAVYFS) traverse the membrane as a helical segment. Residues 112–135 (TYTFCKELFTKENDKHSLLEKESP) are Mitochondrial intermembrane-facing. Residues 136 to 156 (LIFMTSAIIAGAATSICTSPI) traverse the membrane as a helical segment. Topologically, residues 157–193 (WLIKTRFITQEMVGRQKKYRGIVHSMVSIYHEEGFRG) are mitochondrial matrix. Residues 194 to 214 (LYKGLGPSLLGVLHVGVQFPL) traverse the membrane as a helical segment. Topologically, residues 215-230 (YEKFKSILKEKNKNKE) are mitochondrial intermembrane. Residues 231–251 (LGIVEIMIASSVSKIIASVVA) traverse the membrane as a helical segment. Residues 252–296 (YPHEVLRARSQDSSPDSPNRTYRGNIIQMFKQIVREEGWRGLYRG) are Mitochondrial matrix-facing. The chain crosses the membrane as a helical span at residues 297–315 (MGVNLLRVTPSCVITFTSY). Residues 316–329 (EYIKKFLSQNQNHF) are Mitochondrial intermembrane-facing.

Belongs to the mitochondrial carrier (TC 2.A.29) family.

It is found in the mitochondrion inner membrane. Functionally, mitochondrial solute carriers shuttle metabolites, nucleotides, and cofactors through the mitochondrial inner membrane. The polypeptide is Mitochondrial substrate carrier family protein W (mcfW) (Dictyostelium discoideum (Social amoeba)).